The sequence spans 464 residues: Clusterin-like protein 1 (464 aa).

Residues 1–20 (MQPPLFVISVYLLWLKYCDS) form the signal peptide. Positions 56–109 (IKQMKIMMERREEEHAKLMKALKKCKEEKQEAQKLMNEVQERLEEEEKLCQASS) form a coiled coil. Disulfide bonds link C105-C331, C116-C323, C119-C320, C124-C313, and C131-C303. N-linked (GlcNAc...) asparagine glycans are attached at residues N195, N255, N309, N349, N398, and N429.

It belongs to the clusterin family.

The protein resides in the secreted. The sequence is that of Clusterin-like protein 1 from Rattus norvegicus (Rat).